A 116-amino-acid chain; its full sequence is U16-barytoxin-Tl1d (116 aa).

The signal sequence occupies residues 1–20; sequence MKTIIVFLSLLVLATKFGDA. Residues 21-74 constitute a propeptide that is removed on maturation; the sequence is NEGVNQEQMKEVIQNEFREDFLNEMAAMSLLQQLEAIESTLLEKEADRNSRQKR. 3 disulfide bridges follow: Cys75–Cys90, Cys82–Cys95, and Cys89–Cys110.

This sequence belongs to the neurotoxin 14 (magi-1) family. 06 (ICK-Trit) subfamily. As to expression, expressed by the venom gland.

It localises to the secreted. In terms of biological role, ion channel inhibitor. The protein is U16-barytoxin-Tl1d of Trittame loki (Brush-footed trapdoor spider).